The primary structure comprises 266 residues: 15-hydroxyprostaglandin dehydrogenase [NAD(+)] (266 aa).

Residues Gly12 to Ala20, Asp36 to Trp37, Cys63 to Val65, and Asn91 each bind NAD(+). Positions 138 and 148 each coordinate substrate. The Proton acceptor role is filled by Tyr151. NAD(+)-binding positions include Tyr151–Lys155 and Val186–Thr188.

The protein belongs to the short-chain dehydrogenases/reductases (SDR) family. As to quaternary structure, homodimer.

The protein resides in the cytoplasm. It carries out the reaction prostaglandin E2 + NAD(+) = 15-oxoprostaglandin E2 + NADH + H(+). The catalysed reaction is (15S)-hydroxy-(5Z,8Z,11Z,13E)-eicosatetraenoate + NAD(+) = 15-oxo-(5Z,8Z,11Z,13E)-eicosatetraenoate + NADH + H(+). It catalyses the reaction (11R)-hydroxy-(5Z,8Z,12E,14Z)-eicosatetraenoate + NAD(+) = 11-oxo-(5Z,8Z,12E,14Z)-eicosatetraenoate + NADH + H(+). The enzyme catalyses lipoxin A4 + NAD(+) = 15-oxo-(5S,6R)-dihydroxy-(7E,9E,11Z,13E)-eicosatetraenoate + NADH + H(+). It carries out the reaction 15-oxo-(5S,6R)-dihydroxy-(7E,9E,11Z)-eicosatrienoate + NADH + H(+) = (5S,6R,15S)-trihydroxy-(7E,9E,11Z)-eicosatrienoate + NAD(+). The catalysed reaction is prostaglandin A1 + NAD(+) = 15-oxo-prostaglandin A1 + NADH + H(+). It catalyses the reaction prostaglandin E1 + NAD(+) = 15-oxoprostaglandin E1 + NADH + H(+). The enzyme catalyses 14-hydroxy-(4Z,7Z,10Z,12E,16Z,19Z)-docosahexaenoate + NAD(+) = 14-oxo-(4Z,7Z,10Z,12E,16Z,19Z)-docosahexaenoate + NADH + H(+). It carries out the reaction resolvin E1 + NAD(+) = 18-oxo-resolvin E1 + NADH + H(+). The catalysed reaction is resolvin D1 + NAD(+) = 8-oxoresolvin D1 + NADH + H(+). It catalyses the reaction resolvin D1 + NAD(+) = 17-oxoresolvin D1 + NADH + H(+). The enzyme catalyses resolvin D2 + NAD(+) = 7-oxoresolvin D2 + NADH + H(+). It carries out the reaction resolvin D2 + NAD(+) = 16-oxoresolvin D2 + NADH + H(+). In terms of biological role, catalyzes the NAD-dependent dehydrogenation (oxidation) of a broad array of hydroxylated polyunsaturated fatty acids (mainly eicosanoids and docosanoids, including prostaglandins, lipoxins and resolvins), yielding their corresponding keto (oxo) metabolites. Decreases the levels of the pro-proliferative prostaglandins such as prostaglandin E2 (whose activity is increased in cancer because of an increase in the expression of cyclooxygenase 2) and generates oxo-fatty acid products that can profoundly influence cell function by abrogating pro-inflammatory cytokine expression. Converts resolvins E1, D1 and D2 to their oxo products, which represents a mode of resolvin inactivation. Resolvin E1 plays important roles during the resolution phase of acute inflammation, while resolvins D1 and D2 have a unique role in obesity-induced adipose inflammation. The chain is 15-hydroxyprostaglandin dehydrogenase [NAD(+)] (HPGD) from Macaca fascicularis (Crab-eating macaque).